The following is a 384-amino-acid chain: Dual-specificity RNA methyltransferase RlmN (384 aa).

Catalysis depends on Glu-105, which acts as the Proton acceptor. A Radical SAM core domain is found at 111-350; sequence EDDRATLCVS…TIVRKTRGDD (240 aa). Cys-118 and Cys-355 are disulfide-bonded. [4Fe-4S] cluster-binding residues include Cys-125, Cys-129, and Cys-132. Residues 179–180, Ser-211, 233–235, and Asn-312 contribute to the S-adenosyl-L-methionine site; these read GE and SLH. Catalysis depends on Cys-355, which acts as the S-methylcysteine intermediate.

The protein belongs to the radical SAM superfamily. RlmN family. The cofactor is [4Fe-4S] cluster.

It localises to the cytoplasm. It carries out the reaction adenosine(2503) in 23S rRNA + 2 reduced [2Fe-2S]-[ferredoxin] + 2 S-adenosyl-L-methionine = 2-methyladenosine(2503) in 23S rRNA + 5'-deoxyadenosine + L-methionine + 2 oxidized [2Fe-2S]-[ferredoxin] + S-adenosyl-L-homocysteine. It catalyses the reaction adenosine(37) in tRNA + 2 reduced [2Fe-2S]-[ferredoxin] + 2 S-adenosyl-L-methionine = 2-methyladenosine(37) in tRNA + 5'-deoxyadenosine + L-methionine + 2 oxidized [2Fe-2S]-[ferredoxin] + S-adenosyl-L-homocysteine. In terms of biological role, specifically methylates position 2 of adenine 2503 in 23S rRNA and position 2 of adenine 37 in tRNAs. m2A2503 modification seems to play a crucial role in the proofreading step occurring at the peptidyl transferase center and thus would serve to optimize ribosomal fidelity. The protein is Dual-specificity RNA methyltransferase RlmN of Escherichia fergusonii (strain ATCC 35469 / DSM 13698 / CCUG 18766 / IAM 14443 / JCM 21226 / LMG 7866 / NBRC 102419 / NCTC 12128 / CDC 0568-73).